A 526-amino-acid polypeptide reads, in one-letter code: MDSKEMVVEEIMRIHRSLPLRPEIDDVETATSLIQNVEKEDRNRLEAIDKLVKTSSSEVPLELFNVFKEMKKSLVRFQSTEQTREATKILDLESVHVVFDELIQRASFCIASPNSTTALPRSVPVPAPVVSSDEIPFKSKEIISRDDTFVKKAKSSFYSDGLLAPSKPQVLDSTLHQAKNVAGNDGEKLSLIKLASLIEVSAKKATQELNLQHRLMDQLEWLPDSLGKLSSLVRLDLSENCIMVLPATIGGLISLTRLDLHSNRIGQLPESIGDLLNLVNLNLSGNQLSSLPSSFNRLIHLEELDLSSNSLSILPESIGSLVSLKKLDVETNNIEEIPHSISGCSSMEELRADYNRLKALPEAVGKLSTLEILTVRYNNIRQLPTTMSSMANLKELDVSFNELESVPESLCYAKTLVKLNIGNNFANLRSLPGLIGNLEKLEELDMSNNQIRFLPYSFKTLSNLRVLQTEQNPLEELPRDITEKGAQAVVQYMNDLVEARNTKSQRTKPKKSWVNSICFFCKSSTN.

11 LRR repeats span residues 229 to 252 (LSSL…IGGL), 253 to 275 (ISLT…IGDL), 276 to 297 (LNLV…SFNR), 298 to 321 (LIHL…IGSL), 323 to 344 (SLKK…ISGC), 346 to 367 (SMEE…VGKL), 368 to 390 (STLE…MSSM), 391 to 414 (ANLK…CYAK), 416 to 437 (LVKL…LIGN), 438 to 463 (LEKL…TLSN), and 465 to 484 (RVLQ…ITEK). The GVYW; degenerate signature appears at 485–492 (GAQAVVQY).

This sequence belongs to the SHOC2 family. As to expression, widely expressed but preferentially in roots.

Leucine-rich repeat protein that likely mediates protein interactions, possibly in the context of signal transduction. This chain is Plant intracellular Ras-group-related LRR protein 5 (PIRL5), found in Arabidopsis thaliana (Mouse-ear cress).